Here is a 144-residue protein sequence, read N- to C-terminus: Large ribosomal subunit protein uL24 (144 aa).

A disordered region spans residues 102-144 (NIVVEKPEPEPEPRKEETAEAQEAKEEAVAEEKTEVDDNDKQN). Over residues 103-134 (IVVEKPEPEPEPRKEETAEAQEAKEEAVAEEK) the composition is skewed to basic and acidic residues. Positions 135–144 (TEVDDNDKQN) are enriched in acidic residues.

Belongs to the universal ribosomal protein uL24 family. In terms of assembly, part of the 50S ribosomal subunit.

In terms of biological role, one of two assembly initiator proteins, it binds directly to the 5'-end of the 23S rRNA, where it nucleates assembly of the 50S subunit. Located at the polypeptide exit tunnel on the outside of the subunit. The polypeptide is Large ribosomal subunit protein uL24 (rpl24) (Thermoplasma acidophilum (strain ATCC 25905 / DSM 1728 / JCM 9062 / NBRC 15155 / AMRC-C165)).